The chain runs to 301 residues: J domain-containing protein 1 (301 aa).

A J domain is found at 58-150 (TPYDIFGIPK…KKKIVYDTTR (93 aa)). Residues 208-228 (WTVIGIICGLAICIEGTALLA) form a helical membrane-spanning segment.

It belongs to the DnaJ family.

It localises to the mitochondrion membrane. Its function is as follows. Probable chaperone. This chain is J domain-containing protein 1 (JID1), found in Saccharomyces cerevisiae (strain ATCC 204508 / S288c) (Baker's yeast).